We begin with the raw amino-acid sequence, 201 residues long: 3-isopropylmalate dehydratase small subunit (201 aa).

It belongs to the LeuD family. LeuD type 1 subfamily. As to quaternary structure, heterodimer of LeuC and LeuD.

The enzyme catalyses (2R,3S)-3-isopropylmalate = (2S)-2-isopropylmalate. It participates in amino-acid biosynthesis; L-leucine biosynthesis; L-leucine from 3-methyl-2-oxobutanoate: step 2/4. Its function is as follows. Catalyzes the isomerization between 2-isopropylmalate and 3-isopropylmalate, via the formation of 2-isopropylmaleate. The sequence is that of 3-isopropylmalate dehydratase small subunit from Shewanella sp. (strain ANA-3).